We begin with the raw amino-acid sequence, 104 residues long: Large ribosomal subunit protein bL21 (104 aa).

Belongs to the bacterial ribosomal protein bL21 family. As to quaternary structure, part of the 50S ribosomal subunit. Contacts protein L20.

In terms of biological role, this protein binds to 23S rRNA in the presence of protein L20. The protein is Large ribosomal subunit protein bL21 of Nitrosococcus oceani (strain ATCC 19707 / BCRC 17464 / JCM 30415 / NCIMB 11848 / C-107).